Reading from the N-terminus, the 223-residue chain is Proteasome subunit beta type-1 (223 aa).

It belongs to the peptidase T1B family. As to quaternary structure, the 26S proteasome consists of a 20S proteasome core and two 19S regulatory subunits. The 20S proteasome core is composed of 28 subunits that are arranged in four stacked rings, resulting in a barrel-shaped structure. The two end rings are each formed by seven alpha subunits, and the two central rings are each formed by seven beta subunits. The catalytic chamber with the active sites is on the inside of the barrel.

The protein localises to the cytoplasm. The protein resides in the nucleus. In terms of biological role, non-catalytic component of the proteasome, a multicatalytic proteinase complex which is characterized by its ability to cleave peptides with Arg, Phe, Tyr, Leu, and Glu adjacent to the leaving group at neutral or slightly basic pH. The proteasome has an ATP-dependent proteolytic activity. This Petunia hybrida (Petunia) protein is Proteasome subunit beta type-1 (PBF1).